The chain runs to 532 residues: Probable inorganic phosphate transporter 1-9 (532 aa).

At 1–22 (MPELSLLSALDAARIQWYHFKA) the chain is on the cytoplasmic side. The helical transmembrane segment at 23 to 43 (IIVAGMGLFTDAYDLFCIAPI) threads the bilayer. The Extracellular portion of the chain corresponds to 44–62 (MKMISQIYYHKDSIGTALL). Residues 63-83 (STSYAIALLGTALGQLIFGYL) form a helical membrane-spanning segment. The Cytoplasmic segment spans residues 84 to 91 (GDRVGRRK). Residues 92-112 (VYGLSLLIMVFSSFGCGFSVC) form a helical membrane-spanning segment. The Extracellular segment spans residues 113–124 (TTRRSCVMVSLG). The chain crosses the membrane as a helical span at residues 125-145 (FFRFVLGLGIGGDYPLSATIM). Topologically, residues 146-154 (SEFANKRTR) are cytoplasmic. A helical membrane pass occupies residues 155-175 (GAFIAAVFSMQGLGILMSSAV). Residues 176–207 (TMVVCLAFKNAGEGSSEKTNVAGLETLAPPES) are Extracellular-facing. The chain crosses the membrane as a helical span at residues 208 to 228 (DIAWRLILMIGALPAALTFYW). Over 229 to 292 (RMLMPETARY…KLFSRRFLSL (64 aa)) the chain is Cytoplasmic. Residues 293–313 (HGRDLFAASANWFLVDVVFYT) form a helical membrane-spanning segment. Topologically, residues 314-343 (SNLLLSQIFNFSNKPLNSTNVYDSAFEVAK) are extracellular. The chain crosses the membrane as a helical span at residues 344–364 (LAAIVAACSTIPGYWFTVYFI). Over 365–371 (DKIGRVK) the chain is Cytoplasmic. A helical transmembrane segment spans residues 372 to 392 (IQMMGFFLMAVVYLVAGIPYS). Topologically, residues 393–406 (WYWSKHEKTNKGFM) are extracellular. Residues 407 to 427 (VLYGLIFFFSNFGPNTTTFII) form a helical membrane-spanning segment. Over 428 to 441 (PAELFPARFRSTCH) the chain is Cytoplasmic. A helical transmembrane segment spans residues 442 to 462 (GISGAAGKFGAIVGTVGFLWA). Topologically, residues 463-478 (TRHHEEDGFPDVKRVR) are extracellular. Residues 479–499 (IAFLILGGVCIAGMIVTYLFT) traverse the membrane as a helical segment. Topologically, residues 500 to 532 (RETMGRSLEENEDEIVSTSAGSSPANELLRRQY) are cytoplasmic. A disordered region spans residues 509-532 (ENEDEIVSTSAGSSPANELLRRQY). The segment covering 515–524 (VSTSAGSSPA) has biased composition (polar residues).

This sequence belongs to the major facilitator superfamily. Phosphate:H(+) symporter (TC 2.A.1.9) family.

It localises to the membrane. In terms of biological role, high-affinity transporter for external inorganic phosphate. The sequence is that of Probable inorganic phosphate transporter 1-9 (PHT1-9) from Arabidopsis thaliana (Mouse-ear cress).